Consider the following 327-residue polypeptide: Aspartate--ammonia ligase (327 aa).

It belongs to the class-II aminoacyl-tRNA synthetase family. AsnA subfamily.

The protein resides in the cytoplasm. It catalyses the reaction L-aspartate + NH4(+) + ATP = L-asparagine + AMP + diphosphate + H(+). It participates in amino-acid biosynthesis; L-asparagine biosynthesis; L-asparagine from L-aspartate (ammonia route): step 1/1. This Bacillus cereus (strain G9842) protein is Aspartate--ammonia ligase.